The primary structure comprises 220 residues: Nicotinamidase (220 aa).

Residue D11 is part of the active site. 3 residues coordinate Zn(2+): D53, H55, and H94. K119 is a catalytic residue. C163 functions as the Nucleophile in the catalytic mechanism.

Belongs to the isochorismatase family.

It localises to the cytoplasm. It is found in the nucleus. The protein resides in the peroxisome. It catalyses the reaction nicotinamide + H2O = nicotinate + NH4(+). It participates in cofactor biosynthesis; nicotinate biosynthesis; nicotinate from nicotinamide: step 1/1. Functionally, catalyzes the deamidation of nicotinamide, an early step in the NAD(+) salvage pathway. This chain is Nicotinamidase (pnc1), found in Schizosaccharomyces pombe (strain 972 / ATCC 24843) (Fission yeast).